Here is a 135-residue protein sequence, read N- to C-terminus: Aspartate 1-decarboxylase (135 aa).

S25 (schiff-base intermediate with substrate; via pyruvic acid) is an active-site residue. Position 25 is a pyruvic acid (Ser) (S25). Residue T57 participates in substrate binding. Y58 serves as the catalytic Proton donor. Residue 73-75 (GAA) participates in substrate binding.

It belongs to the PanD family. As to quaternary structure, heterooctamer of four alpha and four beta subunits. The cofactor is pyruvate. In terms of processing, is synthesized initially as an inactive proenzyme, which is activated by self-cleavage at a specific serine bond to produce a beta-subunit with a hydroxyl group at its C-terminus and an alpha-subunit with a pyruvoyl group at its N-terminus.

It localises to the cytoplasm. It carries out the reaction L-aspartate + H(+) = beta-alanine + CO2. It functions in the pathway cofactor biosynthesis; (R)-pantothenate biosynthesis; beta-alanine from L-aspartate: step 1/1. Catalyzes the pyruvoyl-dependent decarboxylation of aspartate to produce beta-alanine. The protein is Aspartate 1-decarboxylase of Mycolicibacterium vanbaalenii (strain DSM 7251 / JCM 13017 / BCRC 16820 / KCTC 9966 / NRRL B-24157 / PYR-1) (Mycobacterium vanbaalenii).